Reading from the N-terminus, the 34-residue chain is VTMGYIKDGDGKKIAKKKNKNGRKHVEIDLNKVG.

The disordered stretch occupies residues 1-34; sequence VTMGYIKDGDGKKIAKKKNKNGRKHVEIDLNKVG. A compositionally biased stretch (basic residues) spans 14–23; that stretch reads IAKKKNKNGR. The segment covering 24 to 34 has biased composition (basic and acidic residues); it reads KHVEIDLNKVG.

Expressed by the venom gland.

The protein resides in the secreted. The polypeptide is Non-cysteinic peptide Bs 10 (Hottentotta tamulus sindicus (Scorpion)).